Here is a 539-residue protein sequence, read N- to C-terminus: Squalene monooxygenase SE1 (539 aa).

Transmembrane regions (helical) follow at residues 22-42 (LLID…FLLL) and 71-91 (IAGS…ALAY). Residues 84–85 (VA), 104–105 (ER), arginine 112, arginine 183, valine 199, aspartate 361, and methionine 374 each bind FAD. A helical transmembrane segment spans residues 472-492 (LFLHFFAVAIYGVGRLLIPFP).

This sequence belongs to the squalene monooxygenase family. It depends on FAD as a cofactor. Mostly expressed in flower buds and leaves, and, to a lower extent, at high levels thought, in roots and petioles. In petioles, preferentially observed in vascular bundle tissue (phloem cells and parenchymatous cells near xylem) and resin ducts.

The protein resides in the microsome membrane. Its subcellular location is the endoplasmic reticulum membrane. The enzyme catalyses squalene + reduced [NADPH--hemoprotein reductase] + O2 = (S)-2,3-epoxysqualene + oxidized [NADPH--hemoprotein reductase] + H2O + H(+). It participates in terpene metabolism; lanosterol biosynthesis; lanosterol from farnesyl diphosphate: step 2/3. Its function is as follows. Component of the triterpene saponins (e.g. ginsenosides or panaxosides) and phytosterols biosynthetic pathways. Catalyzes the first oxygenation step in sterol biosynthesis and is suggested to be one of the rate-limiting enzymes in this pathway. This Panax ginseng (Korean ginseng) protein is Squalene monooxygenase SE1.